A 508-amino-acid chain; its full sequence is Heat shock 70 kDa protein 14 (508 aa).

Belongs to the heat shock protein 70 family. As to quaternary structure, component of ribosome-associated complex (RAC).

The protein resides in the cytoplasm. It localises to the cytosol. Component of the ribosome-associated complex (RAC), a complex involved in folding or maintaining nascent polypeptides in a folding-competent state. This is Heat shock 70 kDa protein 14 (hspa14) from Xenopus tropicalis (Western clawed frog).